A 121-amino-acid chain; its full sequence is Small ribosomal subunit protein uS13 (121 aa).

Residues His91 to Lys121 form a disordered region.

The protein belongs to the universal ribosomal protein uS13 family. Part of the 30S ribosomal subunit. Forms a loose heterodimer with protein S19. Forms two bridges to the 50S subunit in the 70S ribosome.

Functionally, located at the top of the head of the 30S subunit, it contacts several helices of the 16S rRNA. In the 70S ribosome it contacts the 23S rRNA (bridge B1a) and protein L5 of the 50S subunit (bridge B1b), connecting the 2 subunits; these bridges are implicated in subunit movement. Contacts the tRNAs in the A and P-sites. This chain is Small ribosomal subunit protein uS13, found in Cupriavidus pinatubonensis (strain JMP 134 / LMG 1197) (Cupriavidus necator (strain JMP 134)).